Here is a 445-residue protein sequence, read N- to C-terminus: Glutamyl-tRNA reductase (445 aa).

Substrate contacts are provided by residues 49–52 (TCNR), serine 109, 114–116 (ETQ), and glutamine 120. Residue cysteine 50 is the Nucleophile of the active site. 189 to 194 (GAGEMS) is an NADP(+) binding site.

It belongs to the glutamyl-tRNA reductase family. As to quaternary structure, homodimer.

It catalyses the reaction (S)-4-amino-5-oxopentanoate + tRNA(Glu) + NADP(+) = L-glutamyl-tRNA(Glu) + NADPH + H(+). It functions in the pathway porphyrin-containing compound metabolism; protoporphyrin-IX biosynthesis; 5-aminolevulinate from L-glutamyl-tRNA(Glu): step 1/2. Its function is as follows. Catalyzes the NADPH-dependent reduction of glutamyl-tRNA(Glu) to glutamate 1-semialdehyde (GSA). The polypeptide is Glutamyl-tRNA reductase (Staphylococcus carnosus (strain TM300)).